A 448-amino-acid polypeptide reads, in one-letter code: Tubulin alpha-2 chain (448 aa).

Residues glutamine 11, glutamate 69, serine 138, glycine 142, threonine 143, threonine 177, asparagine 204, and asparagine 226 each coordinate GTP. Glutamate 69 provides a ligand contact to Mg(2+). Glutamate 252 is an active-site residue. Residues lysine 428–tyrosine 448 are disordered. Over residues aspartate 429–tyrosine 448 the composition is skewed to acidic residues.

Belongs to the tubulin family. In terms of assembly, dimer of alpha and beta chains. A typical microtubule is a hollow water-filled tube with an outer diameter of 25 nm and an inner diameter of 15 nM. Alpha-beta heterodimers associate head-to-tail to form protofilaments running lengthwise along the microtubule wall with the beta-tubulin subunit facing the microtubule plus end conferring a structural polarity. Microtubules usually have 13 protofilaments but different protofilament numbers can be found in some organisms and specialized cells. It depends on Mg(2+) as a cofactor. Post-translationally, undergoes a tyrosination/detyrosination cycle, the cyclic removal and re-addition of a C-terminal tyrosine residue. In terms of tissue distribution, expressed in intestine, pharyngeal muscle cells, and a subset of neurons.

Its subcellular location is the cytoplasm. The protein resides in the cytoskeleton. The enzyme catalyses GTP + H2O = GDP + phosphate + H(+). In terms of biological role, tubulin is the major constituent of microtubules, a cylinder consisting of laterally associated linear protofilaments composed of alpha- and beta-tubulin heterodimers. Microtubules grow by the addition of GTP-tubulin dimers to the microtubule end, where a stabilizing cap forms. Below the cap, tubulin dimers are in GDP-bound state, owing to GTPase activity of alpha-tubulin. Required for the normal dynamic behavior of the non-centrosomal microtubules in the epidermal syncytium. Involved in the redistribution of microtubule end-binding protein EB1/ebp-2 caused by wounding. Required to modulate expression in the epidermis of antimicrobial peptides, such as nlp-29, after wounding, or fungal infection. This Caenorhabditis elegans protein is Tubulin alpha-2 chain (tba-2).